Here is a 181-residue protein sequence, read N- to C-terminus: Urease accessory protein UreE (181 aa).

Positions 143–181 are disordered; the sequence is FDPEPGAYNQAGQGHSHGHSHGHSHNHDHEHSHGHKHAH.

The protein belongs to the UreE family.

The protein localises to the cytoplasm. In terms of biological role, involved in urease metallocenter assembly. Binds nickel. Probably functions as a nickel donor during metallocenter assembly. This is Urease accessory protein UreE from Marinobacter nauticus (strain ATCC 700491 / DSM 11845 / VT8) (Marinobacter aquaeolei).